The following is a 114-amino-acid chain: Aspartate 1-decarboxylase (114 aa).

Ser-25 acts as the Schiff-base intermediate with substrate; via pyruvic acid in catalysis. Residue Ser-25 is modified to Pyruvic acid (Ser). Thr-57 is a binding site for substrate. Tyr-58 functions as the Proton donor in the catalytic mechanism. Residue 71 to 73 (GAA) coordinates substrate.

Belongs to the PanD family. As to quaternary structure, heterooctamer of four alpha and four beta subunits. The cofactor is pyruvate. In terms of processing, is synthesized initially as an inactive proenzyme, which is activated by self-cleavage at a specific serine bond to produce a beta-subunit with a hydroxyl group at its C-terminus and an alpha-subunit with a pyruvoyl group at its N-terminus.

The protein localises to the cytoplasm. It catalyses the reaction L-aspartate + H(+) = beta-alanine + CO2. The protein operates within cofactor biosynthesis; (R)-pantothenate biosynthesis; beta-alanine from L-aspartate: step 1/1. Its function is as follows. Catalyzes the pyruvoyl-dependent decarboxylation of aspartate to produce beta-alanine. The sequence is that of Aspartate 1-decarboxylase from Campylobacter hominis (strain ATCC BAA-381 / DSM 21671 / CCUG 45161 / LMG 19568 / NCTC 13146 / CH001A).